Reading from the N-terminus, the 276-residue chain is Large ribosomal subunit protein uL2 (276 aa).

The segment at 223–276 (GSAMNPVDHPHGGGEGKAPIGHPGPLTPWGKPTLGYKTRKKNKPSDKFIVKRRK) is disordered. Over residues 265 to 276 (KPSDKFIVKRRK) the composition is skewed to basic and acidic residues.

The protein belongs to the universal ribosomal protein uL2 family. In terms of assembly, part of the 50S ribosomal subunit. Forms a bridge to the 30S subunit in the 70S ribosome.

Functionally, one of the primary rRNA binding proteins. Required for association of the 30S and 50S subunits to form the 70S ribosome, for tRNA binding and peptide bond formation. It has been suggested to have peptidyltransferase activity; this is somewhat controversial. Makes several contacts with the 16S rRNA in the 70S ribosome. This chain is Large ribosomal subunit protein uL2, found in Caldicellulosiruptor saccharolyticus (strain ATCC 43494 / DSM 8903 / Tp8T 6331).